We begin with the raw amino-acid sequence, 294 residues long: 33 kDa chaperonin (294 aa).

2 disulfide bridges follow: Cys239-Cys241 and Cys272-Cys275.

Belongs to the HSP33 family. Post-translationally, under oxidizing conditions two disulfide bonds are formed involving the reactive cysteines. Under reducing conditions zinc is bound to the reactive cysteines and the protein is inactive.

It is found in the cytoplasm. Its function is as follows. Redox regulated molecular chaperone. Protects both thermally unfolding and oxidatively damaged proteins from irreversible aggregation. Plays an important role in the bacterial defense system toward oxidative stress. This chain is 33 kDa chaperonin, found in Listeria innocua serovar 6a (strain ATCC BAA-680 / CLIP 11262).